Consider the following 308-residue polypeptide: Protein FdhE homolog (308 aa).

It belongs to the FdhE family.

It is found in the cytoplasm. Its function is as follows. Necessary for formate dehydrogenase activity. This is Protein FdhE homolog from Edwardsiella ictaluri (strain 93-146).